We begin with the raw amino-acid sequence, 324 residues long: uncharacterized protein (324 aa).

This is an uncharacterized protein from Methanocaldococcus jannaschii (strain ATCC 43067 / DSM 2661 / JAL-1 / JCM 10045 / NBRC 100440) (Methanococcus jannaschii).